A 298-amino-acid chain; its full sequence is Isochorismatase domain-containing protein 1 (298 aa).

Tyrosine 160 is subject to Phosphotyrosine. Lysine 279 is subject to N6-succinyllysine.

It belongs to the isochorismatase family.

This chain is Isochorismatase domain-containing protein 1 (ISOC1), found in Bos taurus (Bovine).